We begin with the raw amino-acid sequence, 168 residues long: Large ribosomal subunit protein uL10 (168 aa).

It belongs to the universal ribosomal protein uL10 family. As to quaternary structure, part of the ribosomal stalk of the 50S ribosomal subunit. The N-terminus interacts with L11 and the large rRNA to form the base of the stalk. The C-terminus forms an elongated spine to which L12 dimers bind in a sequential fashion forming a multimeric L10(L12)X complex.

Its function is as follows. Forms part of the ribosomal stalk, playing a central role in the interaction of the ribosome with GTP-bound translation factors. The chain is Large ribosomal subunit protein uL10 from Ralstonia pickettii (strain 12J).